The sequence spans 341 residues: Protein-glutamate methylesterase/protein-glutamine glutaminase 2 (341 aa).

Residues R11–R126 enclose the Response regulatory domain. A 4-aspartylphosphate modification is found at D62. A CheB-type methylesterase domain is found at P152–R341. Active-site residues include S166, H193, and D285.

The protein belongs to the CheB family. In terms of processing, phosphorylated by CheA. Phosphorylation of the N-terminal regulatory domain activates the methylesterase activity.

The protein localises to the cytoplasm. The catalysed reaction is [protein]-L-glutamate 5-O-methyl ester + H2O = L-glutamyl-[protein] + methanol + H(+). The enzyme catalyses L-glutaminyl-[protein] + H2O = L-glutamyl-[protein] + NH4(+). In terms of biological role, involved in chemotaxis. Part of a chemotaxis signal transduction system that modulates chemotaxis in response to various stimuli. Catalyzes the demethylation of specific methylglutamate residues introduced into the chemoreceptors (methyl-accepting chemotaxis proteins or MCP) by CheR. Also mediates the irreversible deamidation of specific glutamine residues to glutamic acid. In Anaeromyxobacter dehalogenans (strain 2CP-C), this protein is Protein-glutamate methylesterase/protein-glutamine glutaminase 2.